A 201-amino-acid polypeptide reads, in one-letter code: Probable molybdenum cofactor guanylyltransferase (201 aa).

Residues 6–8 (LAG), lysine 18, aspartate 65, and aspartate 97 each bind GTP. A Mg(2+)-binding site is contributed by aspartate 97.

This sequence belongs to the MobA family. Mg(2+) serves as cofactor.

Its subcellular location is the cytoplasm. It catalyses the reaction Mo-molybdopterin + GTP + H(+) = Mo-molybdopterin guanine dinucleotide + diphosphate. In terms of biological role, transfers a GMP moiety from GTP to Mo-molybdopterin (Mo-MPT) cofactor (Moco or molybdenum cofactor) to form Mo-molybdopterin guanine dinucleotide (Mo-MGD) cofactor. This is Probable molybdenum cofactor guanylyltransferase from Staphylococcus epidermidis (strain ATCC 35984 / DSM 28319 / BCRC 17069 / CCUG 31568 / BM 3577 / RP62A).